Here is a 377-residue protein sequence, read N- to C-terminus: Prostaglandin reductase-3 (377 aa).

Position 35 is an N6-acetyllysine (Lys-35). Positions 185, 205, 209, 224, 247, 269, and 275 each coordinate NADP(+). Phosphoserine is present on Ser-299. NADP(+) contacts are provided by residues 303 to 305 (FFL) and Asn-361.

The protein belongs to the zinc-containing alcohol dehydrogenase family. Quinone oxidoreductase subfamily. As to expression, widely expressed.

It is found in the peroxisome. The catalysed reaction is 13,14-dihydro-15-oxo-prostaglandin E2 + NADP(+) = 15-oxoprostaglandin E2 + NADPH + H(+). The enzyme catalyses 13,14-dihydro-15-oxo-prostaglandin E1 + NADP(+) = 15-oxoprostaglandin E1 + NADPH + H(+). It catalyses the reaction 13,14-dihydro-15-oxo-PGF2alpha + NADP(+) = 15-oxoprostaglandin F2alpha + NADPH + H(+). It carries out the reaction 13,14-dihydro-15-oxo-prostaglandin F1alpha + NADP(+) = 15-oxoprostaglandin F1alpha + NADPH + H(+). In terms of biological role, functions as 15-oxo-prostaglandin 13-reductase and acts on 15-keto-PGE1, 15-keto-PGE2, 15-keto-PGE1-alpha and 15-keto-PGE2-alpha with highest efficiency towards 15-keto-PGE2-alpha. Overexpression represses transcriptional activity of PPARG and inhibits adipocyte differentiation. The protein is Prostaglandin reductase-3 of Mus musculus (Mouse).